The chain runs to 639 residues: 1-deoxy-D-xylulose-5-phosphate synthase (639 aa).

Thiamine diphosphate contacts are provided by residues histidine 79 and 120–122 (GHS). Residue aspartate 151 coordinates Mg(2+). Thiamine diphosphate-binding positions include 152–153 (GG), asparagine 180, tyrosine 288, and glutamate 370. Asparagine 180 serves as a coordination point for Mg(2+).

It belongs to the transketolase family. DXPS subfamily. Homodimer. It depends on Mg(2+) as a cofactor. The cofactor is thiamine diphosphate.

It carries out the reaction D-glyceraldehyde 3-phosphate + pyruvate + H(+) = 1-deoxy-D-xylulose 5-phosphate + CO2. The protein operates within metabolic intermediate biosynthesis; 1-deoxy-D-xylulose 5-phosphate biosynthesis; 1-deoxy-D-xylulose 5-phosphate from D-glyceraldehyde 3-phosphate and pyruvate: step 1/1. Functionally, catalyzes the acyloin condensation reaction between C atoms 2 and 3 of pyruvate and glyceraldehyde 3-phosphate to yield 1-deoxy-D-xylulose-5-phosphate (DXP). The protein is 1-deoxy-D-xylulose-5-phosphate synthase of Methylococcus capsulatus (strain ATCC 33009 / NCIMB 11132 / Bath).